The sequence spans 252 residues: MLTFIGLGLFDEYDVSVRGLDAIKSADTVFLEVYTSVLMGAPIERLEAFYGKKITPLYREDVEIHADKILDAAEFGNAVFLTAGDSMVATTHSDLRIRAADRNIPTTIIHGASITTAVCGLSGLQNYRFGKSVSVPFPYGKWFPMTPIEVISANLKENLHTLVFLDIQKDKERYMKISEAVDLLEEQARRVDAGIPLYVGIARAGSPEPTVHAGNAEEMKAFDFGSPLHILIVPATLHEIEREYLERFAGLC.

S-adenosyl-L-methionine is bound by residues L9, D85, V88, 113–114, L165, A204, and H229; that span reads SI.

Belongs to the diphthine synthase family. As to quaternary structure, homodimer.

The catalysed reaction is 2-[(3S)-amino-3-carboxypropyl]-L-histidyl-[translation elongation factor 2] + 3 S-adenosyl-L-methionine = diphthine-[translation elongation factor 2] + 3 S-adenosyl-L-homocysteine + 3 H(+). The protein operates within protein modification; peptidyl-diphthamide biosynthesis. S-adenosyl-L-methionine-dependent methyltransferase that catalyzes the trimethylation of the amino group of the modified target histidine residue in translation elongation factor 2 (EF-2), to form an intermediate called diphthine. The three successive methylation reactions represent the second step of diphthamide biosynthesis. This Methanocorpusculum labreanum (strain ATCC 43576 / DSM 4855 / Z) protein is Diphthine synthase.